An 84-amino-acid polypeptide reads, in one-letter code: Sec-independent protein translocase protein TatA (84 aa).

Residues 1–21 (MGGLQPWHWLIVIAVFVLLFG) traverse the membrane as a helical segment. The interval 46–84 (MQSDSNAAKSDQPEQITSERVVVDPSTQSTSSNSDKRPA) is disordered. Residues 48 to 63 (SDSNAAKSDQPEQITS) are compositionally biased toward polar residues.

This sequence belongs to the TatA/E family. In terms of assembly, the Tat system comprises two distinct complexes: a TatABC complex, containing multiple copies of TatA, TatB and TatC subunits, and a separate TatA complex, containing only TatA subunits. Substrates initially bind to the TatABC complex, which probably triggers association of the separate TatA complex to form the active translocon.

It is found in the cell membrane. Functionally, part of the twin-arginine translocation (Tat) system that transports large folded proteins containing a characteristic twin-arginine motif in their signal peptide across membranes. TatA could form the protein-conducting channel of the Tat system. This Mycolicibacterium gilvum (strain PYR-GCK) (Mycobacterium gilvum (strain PYR-GCK)) protein is Sec-independent protein translocase protein TatA.